A 208-amino-acid polypeptide reads, in one-letter code: Ras-related protein M-Ras (208 aa).

Aspartate 21, glycine 22, glycine 23, valine 24, glycine 25, lysine 26, serine 27, alanine 28, phenylalanine 38, valine 39, proline 40, tyrosine 42, proline 44, and threonine 45 together coordinate GTP. Serine 27 contacts Mg(2+). Positions 42-50 match the Effector region motif; sequence YDPTIEDSY. Threonine 45 and aspartate 67 together coordinate Mg(2+). Residues glycine 70, asparagine 126, lysine 127, aspartate 129, serine 156, alanine 157, and lysine 158 each contribute to the GTP site. Cysteine methyl ester is present on cysteine 205. Residue cysteine 205 is the site of S-geranylgeranyl cysteine attachment. Residues 206 to 208 constitute a propeptide, removed in mature form; that stretch reads VIL.

This sequence belongs to the small GTPase superfamily. Ras family. As to quaternary structure, component of the SHOC2-MRAS-PP1c (SMP) holophosphatase complex consisting of SHOC2, GTP-bound M-Ras/MRAS and the catalytic subunit of protein phosphatase 1 (either PPP1CA, PPP1CB or PPP1CC). Interacts (active GTP-bound form) with both SHOC2 and PP1c (all isoforms) to form a tertiary complex; SHOC2 and PP1c preferably bind M-Ras/MRAS, but they also bind K-Ras/KRAS, N-Ras/NRAS and H-Ras/HRAS. Interacts with RGL3. Interacts (active GTP-bound form preferentially) with RGS14. Requires Mg(2+) as cofactor. Expressed in skeletal muscle cells.

It localises to the cell membrane. It carries out the reaction GTP + H2O = GDP + phosphate + H(+). Functionally, signal transducer in the Ras-MAPK signaling pathway that regulates cell proliferation and survival. Core component of the SHOC2-MRAS-PP1c (SMP) holophosphatase complex that regulates the MAPK pathway activation. The formation of the SMP complex only occurs when MRAS is GTP-bound. MRAS has low intrinsic GTPase activity and may require additional factors for activation. The SMP complex specifically dephosphorylates the inhibitory phosphorylation at 'Ser-259' of RAF1 kinase, 'Ser-365' of BRAF kinase and 'Ser-214' of ARAF kinase, stimulating their kinase activities. This is Ras-related protein M-Ras (Mras) from Rattus norvegicus (Rat).